The following is a 670-amino-acid chain: Solute carrier organic anion transporter family member 1A1 (670 aa).

Topologically, residues 1–20 (MEETEKKIATQEGRLFSKMK) are cytoplasmic. The chain crosses the membrane as a helical span at residues 21-40 (VFLLSLTCACLTKSLSGVYM). The Extracellular segment spans residues 41-59 (NSMLTQIERQFDISTSVAG). A helical membrane pass occupies residues 60–80 (LINGSFEIGNLFFIVFVSYFG). The Cytoplasmic portion of the chain corresponds to 81-86 (TKLHRP). The helical transmembrane segment at 87–111 (VVIGIGCVIMGLGCLLMSLPHFFMG) threads the bilayer. The Extracellular segment spans residues 112–155 (RYEYETTISPTGNLSSNSFLCMENRTQTLKPTQDPAECVKEMKS). Residues Asn124 and Asn135 are each glycosylated (N-linked (GlcNAc...) asparagine). The helical transmembrane segment at 156–184 (LMWICVMVGNIIRGIGETPIVPLGISYIE) threads the bilayer. Residues 185–203 (DFAKSENSPLYIGILEMGK) lie on the Cytoplasmic side of the membrane. The chain crosses the membrane as a helical span at residues 204–224 (VAGPIFGLLLGSYCAQIYVDI). The Extracellular segment spans residues 225–242 (GSVNTDDLTITPSDTRWV). A helical membrane pass occupies residues 243–267 (GAWWIGFLVCAGVNILTSIPFFFLP). The Cytoplasmic portion of the chain corresponds to 268 to 311 (KALPKKGQQENVAVTKDGKVEKYGGQAREENLGITKDFLTFMKR). A helical transmembrane segment spans residues 312 to 333 (LFCNPIYMLFILTSVLQVNGFI). At 334 to 353 (NKFTFLPKYLEQQYGKSTAE) the chain is on the extracellular side. Residues 354–377 (AIFLIGVYSLPPICLGYLIGGFIM) traverse the membrane as a helical segment. The Cytoplasmic segment spans residues 378 to 381 (KKFK). The helical transmembrane segment at 382–405 (ITVKKAAYLAFCLSVFEYLLFLCH) threads the bilayer. The Extracellular portion of the chain corresponds to 406-513 (FMLTCDNAAV…PECANRLQYF (108 aa)). The Kazal-like domain maps to 433–488 (SKVLADCNTRCSCSTNTWDPVCGDNGVAYMSACLAGCKKFVGTGTNMVFQDCSCIQ). 3 disulfides stabilise this stretch: Cys439/Cys469, Cys445/Cys465, and Cys454/Cys486. N-linked (GlcNAc...) asparagine glycosylation occurs at Asn492. The chain crosses the membrane as a helical span at residues 514–536 (LILTIIISFIYSLTAIPGYMVFL). Topologically, residues 537–545 (RCVKSEEKS) are cytoplasmic. The helical transmembrane segment at 546-571 (LGVGLHTFCIRVFAGIPAPVYFGALI) threads the bilayer. Residues 572 to 605 (DRTCLHWGTLKCGQRGACRMYDINSFRHIYLGLP) lie on the Extracellular side of the membrane. Residues 606 to 623 (IALRGSSYLPAFFILILM) traverse the membrane as a helical segment. Topologically, residues 624 to 670 (RKFQFPGDIDSSATDHTEMMLGEKESEHTDVHGSPQVENDGELKTKL) are cytoplasmic. Phosphoserine is present on residues Ser634 and Ser635. The span at 645–654 (GEKESEHTDV) shows a compositional bias: basic and acidic residues. The disordered stretch occupies residues 645-670 (GEKESEHTDVHGSPQVENDGELKTKL).

Belongs to the organo anion transporter (TC 2.A.60) family. Binds to PDZK1. Interaction with PDZK1 is required for expression on hepatocyte surface. Post-translationally, glycosylated. As to expression, highly expressed in liver and kidney, and at lower levels in brain, lung, skeletal muscle and proximal colon.

The protein localises to the basolateral cell membrane. It catalyses the reaction estrone 3-sulfate(out) + hydrogencarbonate(in) = estrone 3-sulfate(in) + hydrogencarbonate(out). It carries out the reaction taurocholate(out) + hydrogencarbonate(in) = taurocholate(in) + hydrogencarbonate(out). The catalysed reaction is L-thyroxine(out) = L-thyroxine(in). The enzyme catalyses prostaglandin E2(out) = prostaglandin E2(in). It catalyses the reaction 17beta-estradiol 17-O-(beta-D-glucuronate)(out) = 17beta-estradiol 17-O-(beta-D-glucuronate)(in). It carries out the reaction dehydroepiandrosterone 3-sulfate(out) = dehydroepiandrosterone 3-sulfate(in). In terms of biological role, mediates the Na(+)-independent transport of organic anions such as steroid sulfate conjugates (dehydroepiandrosterone sulfate (DHEAS), 17-beta-glucuronosyl estradiol, estrone-3-sulfate), conjugated (taurocholate) and unconjugated (cholate) bile acids, prostaglandin E2 (PGE2) and L-thyroxine T4. Also capable of transporting sulfobromophthalein (BSP), ouabain and gadoxetate. Hydrogencarbonate/HCO3(-) acts as the probable counteranion that exchanges for organic anions. Shows a pH-sensitive substrate specificity which may be ascribed to the protonation state of the binding site and leads to a stimulation of substrate transport in an acidic microenvironment. This chain is Solute carrier organic anion transporter family member 1A1, found in Rattus norvegicus (Rat).